The following is a 424-amino-acid chain: Enolase (424 aa).

Position 162 (Q162) interacts with (2R)-2-phosphoglycerate. The active-site Proton donor is the E204. 3 residues coordinate Mg(2+): D241, E284, and D311. (2R)-2-phosphoglycerate-binding residues include K336, R365, S366, and K387. Catalysis depends on K336, which acts as the Proton acceptor.

This sequence belongs to the enolase family. Mg(2+) serves as cofactor.

The protein localises to the cytoplasm. Its subcellular location is the secreted. It localises to the cell surface. It catalyses the reaction (2R)-2-phosphoglycerate = phosphoenolpyruvate + H2O. The protein operates within carbohydrate degradation; glycolysis; pyruvate from D-glyceraldehyde 3-phosphate: step 4/5. In terms of biological role, catalyzes the reversible conversion of 2-phosphoglycerate (2-PG) into phosphoenolpyruvate (PEP). It is essential for the degradation of carbohydrates via glycolysis. This chain is Enolase, found in Chelativorans sp. (strain BNC1).